The sequence spans 447 residues: MAGYEVNFDGLVGLTHHYAGLSFGNEASTTHQNHTSNPRLAAKQGLLKMKALADLGYKQGVLPPQERPAIGVLRKLGFSGSDEQVLSDVARNAPRLLSAVSSASSMWTANAATVSPSADSADGRVHFTVANLHNKFHRAIEAETTAVLLPAVFNNHRHFVHHNALPSVTLLGDEGAANHNRLGGEYASPAIQMFVYGRQGMESGAVPGRYPARQTREASQAVARLHQLDPKRTVFVQQNPAVIDQGVFHNDVIAVSNRNVLFHHELAFLSSTQVMDDIRCKMAGLEQQLVNIEVPEAEVSVADAVSTYLFNSQLLHKANGKMLLVIPQESQDNPSVWRYLSELVSGDGPIDELRVFDLRESMRNGGGPACLRLRVVLNDAELQAVNSRVMLTPALFVTLNNWVDQHYRDHLQFKDLADPHLLQEGRQALDELTRILNLGPVYPFQRN.

Residues 19-28 (AGLSFGNEAS), Asn-110, and 137-138 (HR) contribute to the substrate site. Residue Glu-174 is part of the active site. Arg-213 provides a ligand contact to substrate. His-249 is a catalytic residue. Positions 251 and 364 each coordinate substrate. Residue Cys-370 is the Nucleophile of the active site.

This sequence belongs to the succinylarginine dihydrolase family. In terms of assembly, homodimer.

The enzyme catalyses N(2)-succinyl-L-arginine + 2 H2O + 2 H(+) = N(2)-succinyl-L-ornithine + 2 NH4(+) + CO2. The protein operates within amino-acid degradation; L-arginine degradation via AST pathway; L-glutamate and succinate from L-arginine: step 2/5. Its function is as follows. Catalyzes the hydrolysis of N(2)-succinylarginine into N(2)-succinylornithine, ammonia and CO(2). The polypeptide is N-succinylarginine dihydrolase (Yersinia pseudotuberculosis serotype O:1b (strain IP 31758)).